The chain runs to 326 residues: Putative ribose-phosphate pyrophosphokinase 2 (326 aa).

ATP-binding positions include 43 to 45 (DGE) and 102 to 103 (RQ). H136 is a Mg(2+) binding site. D-ribose 5-phosphate-binding positions include D225 and 229 to 233 (NTGKT).

In terms of assembly, homohexamer. Mg(2+) is required as a cofactor.

It is found in the cytoplasm. The enzyme catalyses D-ribose 5-phosphate + ATP = 5-phospho-alpha-D-ribose 1-diphosphate + AMP + H(+). It participates in metabolic intermediate biosynthesis; 5-phospho-alpha-D-ribose 1-diphosphate biosynthesis; 5-phospho-alpha-D-ribose 1-diphosphate from D-ribose 5-phosphate (route I): step 1/1. In terms of biological role, involved in the biosynthesis of the central metabolite phospho-alpha-D-ribosyl-1-pyrophosphate (PRPP) via the transfer of pyrophosphoryl group from ATP to 1-hydroxyl of ribose-5-phosphate (Rib-5-P). The sequence is that of Putative ribose-phosphate pyrophosphokinase 2 from Streptococcus pyogenes serotype M6 (strain ATCC BAA-946 / MGAS10394).